Here is a 363-residue protein sequence, read N- to C-terminus: Chorismate synthase (363 aa).

2 residues coordinate NADP(+): Arg48 and Arg54. FMN contacts are provided by residues Arg125–Ser127, Asn237–Ala238, Gly277, Lys292–Ser296, and Arg318.

Belongs to the chorismate synthase family. Homotetramer. Requires FMNH2 as cofactor.

The catalysed reaction is 5-O-(1-carboxyvinyl)-3-phosphoshikimate = chorismate + phosphate. The protein operates within metabolic intermediate biosynthesis; chorismate biosynthesis; chorismate from D-erythrose 4-phosphate and phosphoenolpyruvate: step 7/7. In terms of biological role, catalyzes the anti-1,4-elimination of the C-3 phosphate and the C-6 proR hydrogen from 5-enolpyruvylshikimate-3-phosphate (EPSP) to yield chorismate, which is the branch point compound that serves as the starting substrate for the three terminal pathways of aromatic amino acid biosynthesis. This reaction introduces a second double bond into the aromatic ring system. The protein is Chorismate synthase of Pseudomonas fluorescens (strain Pf0-1).